The following is a 100-amino-acid chain: Large ribosomal subunit protein eL14 (100 aa).

This sequence belongs to the eukaryotic ribosomal protein eL14 family.

The sequence is that of Large ribosomal subunit protein eL14 from Aeropyrum pernix (strain ATCC 700893 / DSM 11879 / JCM 9820 / NBRC 100138 / K1).